Consider the following 293-residue polypeptide: Ribonuclease HIII (293 aa).

In terms of domain architecture, RNase H type-2 spans 78-293 (LPLIGTDEVG…TEKAKKRLER (216 aa)). D84, E85, and D187 together coordinate a divalent metal cation.

The protein belongs to the RNase HII family. RnhC subfamily. Mn(2+) is required as a cofactor. Requires Mg(2+) as cofactor.

It is found in the cytoplasm. It carries out the reaction Endonucleolytic cleavage to 5'-phosphomonoester.. Functionally, endonuclease that specifically degrades the RNA of RNA-DNA hybrids. The chain is Ribonuclease HIII (rnhC) from Streptococcus pneumoniae serotype 4 (strain ATCC BAA-334 / TIGR4).